Reading from the N-terminus, the 555-residue chain is Dynein regulatory complex protein 11 (555 aa).

IQ domains lie at 154 to 183 and 199 to 226; these read EDEA…TKRQ and HEEA…ADKE. Disordered regions lie at residues 232–255, 299–377, 450–469, and 501–555; these read MKPK…MRRK, KRNP…EQKI, AAKL…EPFS, and AKKD…SCGA. Composition is skewed to basic and acidic residues over residues 235 to 244 and 338 to 367; these read KPRDPKRDPQ and GDGK…KGGG. Basic residues predominate over residues 452–464; it reads KLGKKGKKKKGKK. Positions 501-521 are enriched in basic and acidic residues; the sequence is AKKDEKDAAGDGKGKGKDGKG. Residues 537–546 show a composition bias toward basic residues; that stretch reads KKKKGGKKKS.

Belongs to the AAA ATPase family. DRC11 subfamily. As to quaternary structure, component of the nexin-dynein regulatory complex (N-DRC). Interacts with DRC5.

It is found in the cytoplasm. The protein localises to the cytoskeleton. The protein resides in the flagellum axoneme. Functionally, component of the nexin-dynein regulatory complex (N-DRC), a key regulator of ciliary/flagellar motility which maintains the alignment and integrity of the distal axoneme and regulates microtubule sliding in motile axonemes. The protein is Dynein regulatory complex protein 11 of Chlamydomonas reinhardtii (Chlamydomonas smithii).